Here is a 787-residue protein sequence, read N- to C-terminus: Signal transducer and activator of transcription 5B (787 aa).

Phosphotyrosine is present on Y90. Position 128 is a phosphoserine (S128). Residues 589 to 686 (WNDGAILGFV…EVYSKYYTPV (98 aa)) form the SH2 domain. Phosphotyrosine is present on Y682. Y699 bears the Phosphotyrosine; by HCK, JAK and PTK6 mark.

The protein belongs to the transcription factor STAT family. In terms of assembly, upon activation, forms a homodimer or a heterodimer with a related family member. Binds NR3C1. Interacts with NCOA1. Interacts with NMI. Interacts with SOCS7. Interacts (via SH2 domain) with INSR. Interacts with CPEB3; this inhibits STAT5B-mediated transcriptional activation. Post-translationally, tyrosine phosphorylated in response to signaling via activated KIT, resulting in translocation to the nucleus. Tyrosine phosphorylated in response to signaling via activated FLT3; wild-type FLT3 results in much weaker phosphorylation than constitutively activated mutant FLT3. Alternatively, can be phosphorylated by JAK2. Phosphorylation at Tyr-699 by PTK6 or HCK leads to an increase of its transcriptional activity.

Its subcellular location is the cytoplasm. The protein localises to the nucleus. Its function is as follows. Carries out a dual function: signal transduction and activation of transcription. Mediates cellular responses to the cytokine KITLG/SCF and other growth factors. Binds to the GAS element and activates PRL-induced transcription. Positively regulates hematopoietic/erythroid differentiation. The chain is Signal transducer and activator of transcription 5B (STAT5B) from Bos taurus (Bovine).